We begin with the raw amino-acid sequence, 196 residues long: Putative HTH-type transcriptional regulator in exeN 3'region (196 aa).

The region spanning 120–185 (ASVGGDRLTR…ELFNLFLNHL (66 aa)) is the HTH luxR-type domain. The segment at residues 144–163 (TEAIAAALGIGNGTVKNHRK) is a DNA-binding region (H-T-H motif).

This chain is Putative HTH-type transcriptional regulator in exeN 3'region, found in Aeromonas salmonicida.